The primary structure comprises 825 residues: KH domain-containing protein YLL032C (825 aa).

The KH domain maps to 482–556 (PAEESFFIPE…ANICLAKNDL (75 aa)). Residues 727–740 (SSKSNTSNSNTNGN) are compositionally biased toward low complexity. Residues 727-766 (SSKSNTSNSNTNGNFRSMNNAKSRTTIDNTSQSGASPQRH) are disordered. The span at 741-762 (FRSMNNAKSRTTIDNTSQSGAS) shows a compositional bias: polar residues. Position 762 is a phosphoserine (S762).

It localises to the cytoplasm. The chain is KH domain-containing protein YLL032C from Saccharomyces cerevisiae (strain ATCC 204508 / S288c) (Baker's yeast).